The chain runs to 316 residues: N-acetyl-gamma-glutamyl-phosphate reductase (316 aa).

Residue cysteine 136 is part of the active site.

Belongs to the NAGSA dehydrogenase family. Type 1 subfamily.

It localises to the cytoplasm. The enzyme catalyses N-acetyl-L-glutamate 5-semialdehyde + phosphate + NADP(+) = N-acetyl-L-glutamyl 5-phosphate + NADPH + H(+). The protein operates within amino-acid biosynthesis; L-arginine biosynthesis; N(2)-acetyl-L-ornithine from L-glutamate: step 3/4. In terms of biological role, catalyzes the NADPH-dependent reduction of N-acetyl-5-glutamyl phosphate to yield N-acetyl-L-glutamate 5-semialdehyde. The chain is N-acetyl-gamma-glutamyl-phosphate reductase from Xanthomonas campestris pv. campestris (strain ATCC 33913 / DSM 3586 / NCPPB 528 / LMG 568 / P 25).